The chain runs to 113 residues: Ig heavy chain V-III region ABE-47N (113 aa).

The Ig-like domain occupies 1–113; the sequence is EVKLEESGGG…YWGQGTLVTV (113 aa). Cysteines 22 and 98 form a disulfide.

This chain is Ig heavy chain V-III region ABE-47N, found in Mus musculus (Mouse).